A 473-amino-acid polypeptide reads, in one-letter code: Poly(A) polymerase catalytic subunit (473 aa).

Catalysis depends on residues Asp193 and Asp195.

It belongs to the poxviridae poly(A) polymerase catalytic subunit family. As to quaternary structure, heterodimer of a large (catalytic) subunit and a small (regulatory) subunit.

It carries out the reaction RNA(n) + ATP = RNA(n)-3'-adenine ribonucleotide + diphosphate. Polymerase that creates the 3'-poly(A) tail of mRNA's. This Crocodylus johnstoni (Australian freshwater crocodile) protein is Poly(A) polymerase catalytic subunit (PAPL).